Here is a 440-residue protein sequence, read N- to C-terminus: Xylose isomerase (440 aa).

Active-site residues include His100 and Asp103. Glu231, Glu267, His270, Asp295, Asp306, Asp308, and Asp338 together coordinate Mg(2+).

Belongs to the xylose isomerase family. In terms of assembly, homotetramer. It depends on Mg(2+) as a cofactor.

It localises to the cytoplasm. It catalyses the reaction alpha-D-xylose = alpha-D-xylulofuranose. The sequence is that of Xylose isomerase from Burkholderia thailandensis (strain ATCC 700388 / DSM 13276 / CCUG 48851 / CIP 106301 / E264).